The primary structure comprises 77 residues: uncharacterized protein (77 aa).

This is an uncharacterized protein from Bacillus licheniformis.